A 169-amino-acid chain; its full sequence is Disulfide bond formation protein B (169 aa).

Topologically, residues M1–S13 are cytoplasmic. A helical membrane pass occupies residues W14–T30. The Periplasmic segment spans residues F31–V48. C40 and C43 are oxidised to a cystine. Residues A49 to P64 form a helical membrane-spanning segment. At N65–W71 the chain is on the cytoplasmic side. The helical transmembrane segment at C72–L89 threads the bilayer. The Periplasmic segment spans residues E90–Q144. C104 and C130 form a disulfide bridge. A helical transmembrane segment spans residues W145–A163. The Cytoplasmic segment spans residues Q164–K169.

It belongs to the DsbB family.

The protein localises to the cell inner membrane. Required for disulfide bond formation in some periplasmic proteins. Acts by oxidizing the DsbA protein. This is Disulfide bond formation protein B from Aliivibrio fischeri (strain ATCC 700601 / ES114) (Vibrio fischeri).